The sequence spans 218 residues: uncharacterized protein (218 aa).

7 consecutive transmembrane segments (helical) span residues 9–29 (LLVI…VIAM), 42–62 (AIIL…SAAV), 67–87 (IPFL…QLLI), 107–127 (TIVL…AGAS), 134–154 (VVIG…LIHI), 159–179 (IPLL…EMIV), and 192–212 (GTVE…ASIY).

It belongs to the TerC family.

It localises to the cell membrane. This is an uncharacterized protein from Bacillus subtilis (strain 168).